We begin with the raw amino-acid sequence, 513 residues long: Dentin matrix acidic phosphoprotein 1 (513 aa).

A signal peptide spans 1-16 (MKISILLMFLWGLSCA). The segment at 23–513 (QNNESEDSEE…QDDNDCQDGY (491 aa)) is disordered. An N-linked (GlcNAc...) asparagine glycan is attached at Asn-25. Residues 46–60 (ESSESSEGSKVSSEE) show a composition bias toward low complexity. Positions 101 to 119 (DKDDDEDDSGDDTFGDDDS) are enriched in acidic residues. Residues 143 to 162 (TIQASEESAPQGQDSAQDTT) are compositionally biased toward polar residues. The segment covering 163 to 180 (SESRELDNEDRVDSKPEG) has biased composition (basic and acidic residues). Over residues 208-220 (SELDDEGMQSDDP) the composition is skewed to acidic residues. Polar residues predominate over residues 245–257 (NSEQANTQDSGGS). Residues 275–287 (EEDDRSELDDNNT) are compositionally biased toward acidic residues. Asn-285 is a glycosylation site (N-linked (GlcNAc...) asparagine). The segment covering 296-307 (TENSNSRDTGLS) has biased composition (polar residues). Residues 309–325 (PRRDSKGDSQEDSKENL) show a composition bias toward basic and acidic residues. Residues Asn-324, Asn-345, and Asn-351 are each glycosylated (N-linked (GlcNAc...) asparagine). Low complexity predominate over residues 337 to 354 (SSESSQEANLSSQENSSE). A Cell attachment site motif is present at residues 364–366 (RGD). The span at 376–386 (EDQEDSDSSEE) shows a compositional bias: acidic residues. 2 N-linked (GlcNAc...) asparagine glycosylation sites follow: Asn-413 and Asn-426. Residues 417–426 (ESPESPEDEN) are compositionally biased toward acidic residues. Over residues 427 to 442 (SSSQEGLQSHSSSAES) the composition is skewed to low complexity. Asn-467 is a glycosylation site (N-linked (GlcNAc...) asparagine). Over residues 484–502 (IEIESRKLTVDAYHNKPIG) the composition is skewed to basic and acidic residues. Residues 503–513 (DQDDNDCQDGY) show a composition bias toward acidic residues.

Interacts with importin alpha. In terms of processing, phosphorylated in the cytosol and extracellular matrix and unphosphorylated in the nucleus. Phosphorylation is necessary for nucleocytoplasmic transport and may be catalyzed by a nuclear isoform of CK2 and can be augmented by calcium. Phosphorylated (in vitro) by FAM20C in the extracellular medium at sites within the S-x-E/pS motif. Expressed in tooth particularly in odontoblast, ameloblast and cementoblast.

It is found in the nucleus. Its subcellular location is the cytoplasm. It localises to the secreted. The protein localises to the extracellular space. The protein resides in the extracellular matrix. Its function is as follows. May have a dual function during osteoblast differentiation. In the nucleus of undifferentiated osteoblasts, unphosphorylated form acts as a transcriptional component for activation of osteoblast-specific genes like osteocalcin. During the osteoblast to osteocyte transition phase it is phosphorylated and exported into the extracellular matrix, where it regulates nucleation of hydroxyapatite. The chain is Dentin matrix acidic phosphoprotein 1 (DMP1) from Homo sapiens (Human).